The sequence spans 337 residues: Ferrochelatase (337 aa).

Positions 189 and 293 each coordinate Fe cation.

This sequence belongs to the ferrochelatase family.

The protein resides in the cytoplasm. It catalyses the reaction heme b + 2 H(+) = protoporphyrin IX + Fe(2+). The protein operates within porphyrin-containing compound metabolism; protoheme biosynthesis; protoheme from protoporphyrin-IX: step 1/1. Its function is as follows. Catalyzes the ferrous insertion into protoporphyrin IX. This chain is Ferrochelatase, found in Pseudomonas entomophila (strain L48).